The following is an 80-amino-acid chain: Prehead core component PIP (80 aa).

Positions 43-80 are disordered; that stretch reads FLIEGEEPEDEDEDEDDEDSDDKDDKKDEDSDEDEDDE. Positions 46-64 are enriched in acidic residues; it reads EGEEPEDEDEDEDDEDSDD.

The production of one phage particle requires 250 copies of PIP. During head maturation, PIP is cleaved to form the stable head constituent, internal peptide II. The polypeptide is Prehead core component PIP (67) (Escherichia coli (Bacteriophage T4)).